Reading from the N-terminus, the 110-residue chain is Period circadian protein (110 aa).

A disordered region spans residues 23–97; sequence VTNTSIAGTG…GGAGGGGGVT (75 aa). 12 repeat units span residues 30-31, 33-34, 36-37, 38-39, 40-41, 42-43, 44-45, 46-47, 48-49, 50-51, 52-53, and 54-55. Residues 30 to 63 show a composition bias toward gly residues; sequence GTGGTGGTGTGTGTGTGTGTGTGTGTDTGTGTGT. Positions 30–79 are 24 X 2 AA approximate tandem repeats of G-T; that stretch reads GTGGTGGTGTGTGTGTGTGTGTGTGTDTGTGTGTRNGTNSGTNSGTRTGT. One copy of the 13; approximate repeat lies at 56-57; sequence DT. Repeat copies occupy residues 58–59, 60–61, and 62–63. The stretch at 64 to 65 is one 17; approximate repeat; sequence RN. Positions 64-83 are enriched in low complexity; that stretch reads RNGTNSGTNSGTRTGTASSY. Repeat 18 spans residues 66 to 67; that stretch reads GT. The 19; approximate repeat unit spans residues 68–69; that stretch reads NS. The stretch at 70–71 is repeat 20; that stretch reads GT. One copy of the 21; approximate repeat lies at 72 to 73; sequence NS. The stretch at 74-75 is repeat 22; the sequence is GT. A 23; approximate repeat occupies 76-77; the sequence is RT. Copy 24 of the repeat occupies 78–79; that stretch reads GT. Positions 84–96 are enriched in gly residues; sequence RGGGGGAGGGGGV.

Forms a heterodimer with timeless (TIM); the complex then translocates into the nucleus. Phosphorylated with a circadian rhythmicity, probably by the double-time protein (dbt). Phosphorylation could be implicated in the stability of per monomer and in the formation of heterodimer per-tim.

Its subcellular location is the nucleus. It is found in the cytoplasm. The protein localises to the perinuclear region. Its function is as follows. Essential for biological clock functions. Determines the period length of circadian and ultradian rhythms; an increase in PER dosage leads to shortened circadian rhythms and a decrease leads to lengthened circadian rhythms. Essential for the circadian rhythmicity of locomotor activity, eclosion behavior, and for the rhythmic component of the male courtship song that originates in the thoracic nervous system. The biological cycle depends on the rhythmic formation and nuclear localization of the TIM-PER complex. Light induces the degradation of TIM, which promotes elimination of PER. Nuclear activity of the heterodimer coordinatively regulates PER and TIM transcription through a negative feedback loop. Behaves as a negative element in circadian transcriptional loop. Does not appear to bind DNA, suggesting indirect transcriptional inhibition. The polypeptide is Period circadian protein (per) (Drosophila erecta (Fruit fly)).